The chain runs to 315 residues: Hydrogenase-4 component C (315 aa).

Over 1 to 10 the chain is Periplasmic; the sequence is MRQTLCDGYL. The chain crosses the membrane as a helical span at residues 11 to 31; the sequence is VIFALAQAVILLMLTPLFTGI. Residues 32-73 lie on the Cytoplasmic side of the membrane; that stretch reads SRQIRARMHSRRGPGIWQDYRDIHKLFKRQEVAPTSSGLMFR. A helical transmembrane segment spans residues 74-94; sequence LMPWVLISSMLVLAMALPLFI. Topologically, residues 95–98 are periplasmic; sequence TVSP. A helical transmembrane segment spans residues 99-119; it reads FAGGGDLITLIYLLALFRFFF. Residues 120–140 are Cytoplasmic-facing; sequence ALSGLDTGSPFAGVGASRELT. The helical transmembrane segment at 141 to 161 threads the bilayer; sequence LGILVEPMLILSLLVLALIAG. Topologically, residues 162-181 are periplasmic; that stretch reads STHIEMISNTLAMGWNSPLT. A helical membrane pass occupies residues 182-202; sequence TVLALLACGFACFIEMGKIPF. Residues 203–228 lie on the Cytoplasmic side of the membrane; that stretch reads DVAEAEQELQEGPLTEYSGAGLALAK. The helical transmembrane segment at 229 to 249 threads the bilayer; sequence WGLGLKQVVMASLFVALFLPF. At 250–256 the chain is on the periplasmic side; it reads GRAQELS. A helical transmembrane segment spans residues 257–277; it reads LACLLTSLVVTLLKVLLIFVL. At 278–289 the chain is on the cytoplasmic side; it reads ASIAENTLARGR. The chain crosses the membrane as a helical span at residues 290–310; sequence FLLIHHVTWLGFSLAALAWVF. Residues 311–315 are Periplasmic-facing; the sequence is WLTGL.

This sequence belongs to the complex I subunit 1 family.

It localises to the cell inner membrane. Functionally, possible component of hydrogenase 4. The protein is Hydrogenase-4 component C of Escherichia coli (strain K12).